Reading from the N-terminus, the 1028-residue chain is Formin-like protein 3 (1028 aa).

G2 is lipidated: N-myristoyl glycine. Residues 26–472 (MPMPEPCELE…EAFQRRCHLE (447 aa)) form the GBD/FH3 domain. T95 carries the post-translational modification Phosphothreonine. S174 is modified (phosphoserine). Residues 493 to 541 (ELSEGMPPSDLDLLAPAPPPEEVLPLPPPPAPPLPPPPPPLPDKCPPAP) are disordered. The span at 508-541 (PAPPPEEVLPLPPPPAPPLPPPPPPLPDKCPPAP) shows a compositional bias: pro residues. The region spanning 561-951 (IKKPIKTKFR…MREKQLAQEA (391 aa)) is the FH2 domain. The DAD domain occupies 986-1018 (YEGKDGTIEDIITVLKSVPFTARTAKRGSRFFC). S1014 carries the post-translational modification Phosphoserine.

This sequence belongs to the formin homology family. In terms of assembly, interacts with SRGAP2 (via SH3 domain). As to expression, expressed in endothelial cells.

The protein resides in the cytoplasm. Its subcellular location is the cell membrane. Functionally, plays a role in the regulation of cell morphology and cytoskeletal organization. Required in the control of cell shape and migration. Required for developmental angiogenesis. In this process, required for microtubule reorganization and for efficient endothelial cell elongation. In quiescent endothelial cells, triggers rearrangement of the actin cytoskeleton, but does not alter microtubule alignement. In Homo sapiens (Human), this protein is Formin-like protein 3 (FMNL3).